The primary structure comprises 357 residues: Bcl-2/adenovirus E1B 19 kDa-interacting protein 2-like protein (357 aa).

Residues 32 to 49 (ELELKEEWQDEEFPRLLP) show a composition bias toward basic and acidic residues. Residues 32 to 156 (ELELKEEWQD…LPRAEGLGTS (125 aa)) form a disordered region. Residues 105–117 (ASPTQSAPSSPDG) show a composition bias toward polar residues. The span at 119-134 (SDLEIDELETPSDSEQ) shows a compositional bias: acidic residues. Basic and acidic residues predominate over residues 136-149 (DSGHEFEWEDELPR). One can recognise a CRAL-TRIO domain in the interval 191–352 (DMTVIEPYKK…AVRQLDRDLH (162 aa)).

As to quaternary structure, homodimer. Interacts with BCL2, ARHGAP1, MIF and GFER. In terms of tissue distribution, isoform 2 is expressed in placenta and lung.

In terms of biological role, may be a bridge molecule between BCL2 and ARHGAP1/CDC42 in promoting cell death. The protein is Bcl-2/adenovirus E1B 19 kDa-interacting protein 2-like protein (BNIPL) of Homo sapiens (Human).